Consider the following 277-residue polypeptide: Bifunctional protein FolD (277 aa).

Residues 156–158 (GRS), S183, and I224 each bind NADP(+).

It belongs to the tetrahydrofolate dehydrogenase/cyclohydrolase family. In terms of assembly, homodimer.

The enzyme catalyses (6R)-5,10-methylene-5,6,7,8-tetrahydrofolate + NADP(+) = (6R)-5,10-methenyltetrahydrofolate + NADPH. It catalyses the reaction (6R)-5,10-methenyltetrahydrofolate + H2O = (6R)-10-formyltetrahydrofolate + H(+). It functions in the pathway one-carbon metabolism; tetrahydrofolate interconversion. Catalyzes the oxidation of 5,10-methylenetetrahydrofolate to 5,10-methenyltetrahydrofolate and then the hydrolysis of 5,10-methenyltetrahydrofolate to 10-formyltetrahydrofolate. This is Bifunctional protein FolD from Kosmotoga olearia (strain ATCC BAA-1733 / DSM 21960 / TBF 19.5.1).